A 477-amino-acid polypeptide reads, in one-letter code: Probable periplasmic serine endoprotease DegP-like (477 aa).

Positions 1 to 27 (MSIPRLKSYLMMFAAVLMLGQVLTAQA) are cleaved as a signal peptide. Catalysis depends on charge relay system residues His-117, Asp-147, and Ser-220. Substrate is bound by residues 218 to 220 (GNS) and 275 to 279 (LGVVI). PDZ domains follow at residues 264 to 355 (LKKD…IRNG) and 361 to 466 (DISV…LRQG).

The protein belongs to the peptidase S1C family.

It is found in the periplasm. The catalysed reaction is Acts on substrates that are at least partially unfolded. The cleavage site P1 residue is normally between a pair of hydrophobic residues, such as Val-|-Val.. In terms of biological role, might be efficient in the degradation of transiently denatured and unfolded proteins which accumulate in the periplasm following stress conditions. The protein is Probable periplasmic serine endoprotease DegP-like of Pseudomonas putida (strain ATCC 700007 / DSM 6899 / JCM 31910 / BCRC 17059 / LMG 24140 / F1).